The following is a 471-amino-acid chain: Putative multidrug resistance protein MdtD (471 aa).

The Periplasmic segment spans residues 1 to 11 (MTDLPDSTRWR). The helical transmembrane segment at 12–32 (LWIVAFGFFMQSLDTTIVNTA) threads the bilayer. At 33 to 48 (LPSMAQSLGESPLHMH) the chain is on the cytoplasmic side. The chain crosses the membrane as a helical span at residues 49 to 69 (MVIVSYVLTVAVMLPASGWLA). Residues 70 to 76 (DKVGVRN) are Periplasmic-facing. Residues 77 to 97 (IFFTAIVLFTLGSLFCALSGT) form a helical membrane-spanning segment. The Cytoplasmic portion of the chain corresponds to 98 to 101 (LNEL). A helical transmembrane segment spans residues 102 to 124 (LLARALQGVGGAMMVPVGRLTVM). At 125–137 (KIVPREQYMAAMT) the chain is on the periplasmic side. A helical membrane pass occupies residues 138–158 (FVTLPGQVGPLLGPALGGLLV). At 159–164 (EYASWH) the chain is on the cytoplasmic side. Residues 165 to 185 (WIFLINIPVGIIGAIATLMLM) traverse the membrane as a helical segment. Residues 186 to 196 (PNYTMQTRRFD) lie on the Periplasmic side of the membrane. The helical transmembrane segment at 197-217 (LSGFLLLAVGMAVLTLALDGS) threads the bilayer. At 218 to 224 (KGTGLSP) the chain is on the cytoplasmic side. The helical transmembrane segment at 225 to 245 (LAIAGLVAVGVVALVLYLLHA) threads the bilayer. Residues 246–262 (QNNNRALFSLKLFRTRT) lie on the Periplasmic side of the membrane. The helical transmembrane segment at 263–283 (FSLGLAGSFAGRIGSGMLPFM) threads the bilayer. Over 284–285 (TP) the chain is Cytoplasmic. The helical transmembrane segment at 286–306 (VFLQIGLGFSPFHAGLMMIPM) threads the bilayer. Over 307-341 (VLGSMGMKRIVVQVVNRFGYRRVLVATTLGLSLVT) the chain is Periplasmic. A helical membrane pass occupies residues 342–362 (LLFMTTALLGWYYVLPFVLFL). Residues 363 to 395 (QGMVNSTRFSSMNTLTLKDLPDNLASSGNSLLS) lie on the Cytoplasmic side of the membrane. The chain crosses the membrane as a helical span at residues 396–416 (MIMQLSMSIGVTIAGLLLGLF). At 417–430 (GSQHVSVDSGTTQT) the chain is on the periplasmic side. Residues 431–451 (VFMYTWLSMASIIALPAFIFA) form a helical membrane-spanning segment. The Cytoplasmic segment spans residues 452 to 471 (RVPNDTHQNVAISRRKRSAQ).

Belongs to the major facilitator superfamily. TCR/Tet family.

It localises to the cell inner membrane. This chain is Putative multidrug resistance protein MdtD, found in Escherichia coli O6:K15:H31 (strain 536 / UPEC).